The following is a 99-amino-acid chain: RNA-binding protein Hfq (99 aa).

The 60-residue stretch at 9-68 folds into the Sm domain; that stretch reads DPYLNALRRERIPVSIYLVNGIKLQGQIESFDQFVILLKNTVNQMVYKHAISTVVPARSV. Positions 67–99 are disordered; it reads SVSHHNNNAQQQYQQQAAQAASAQSNETSSQAE. A compositionally biased stretch (low complexity) spans 72-99; the sequence is NNNAQQQYQQQAAQAASAQSNETSSQAE.

Belongs to the Hfq family. In terms of assembly, homohexamer.

Its function is as follows. RNA chaperone that binds small regulatory RNA (sRNAs) and mRNAs to facilitate mRNA translational regulation in response to envelope stress, environmental stress and changes in metabolite concentrations. Also binds with high specificity to tRNAs. The polypeptide is RNA-binding protein Hfq (Actinobacillus succinogenes (strain ATCC 55618 / DSM 22257 / CCUG 43843 / 130Z)).